We begin with the raw amino-acid sequence, 285 residues long: Probable endonuclease 4 (285 aa).

9 residues coordinate Zn(2+): His-69, His-109, Glu-145, Asp-179, His-182, His-216, Asp-229, His-231, and Glu-261.

Belongs to the AP endonuclease 2 family. Zn(2+) is required as a cofactor.

The catalysed reaction is Endonucleolytic cleavage to 5'-phosphooligonucleotide end-products.. In terms of biological role, endonuclease IV plays a role in DNA repair. It cleaves phosphodiester bonds at apurinic or apyrimidinic (AP) sites, generating a 3'-hydroxyl group and a 5'-terminal sugar phosphate. This chain is Probable endonuclease 4, found in Salmonella newport (strain SL254).